A 229-amino-acid polypeptide reads, in one-letter code: Lipoprotein-releasing system ATP-binding protein LolD (229 aa).

The region spanning 6–229 (LELDAIERTY…DGHLTPYVPA (224 aa)) is the ABC transporter domain. An ATP-binding site is contributed by 42-49 (GPSGSGKS).

The protein belongs to the ABC transporter superfamily. Lipoprotein translocase (TC 3.A.1.125) family. As to quaternary structure, the complex is composed of two ATP-binding proteins (LolD) and two transmembrane proteins (LolC and LolE).

It is found in the cell inner membrane. Functionally, part of the ABC transporter complex LolCDE involved in the translocation of mature outer membrane-directed lipoproteins, from the inner membrane to the periplasmic chaperone, LolA. Responsible for the formation of the LolA-lipoprotein complex in an ATP-dependent manner. The protein is Lipoprotein-releasing system ATP-binding protein LolD of Maricaulis maris (strain MCS10) (Caulobacter maris).